A 291-amino-acid chain; its full sequence is ATP synthase gamma chain (291 aa).

Belongs to the ATPase gamma chain family. F-type ATPases have 2 components, CF(1) - the catalytic core - and CF(0) - the membrane proton channel. CF(1) has five subunits: alpha(3), beta(3), gamma(1), delta(1), epsilon(1). CF(0) has three main subunits: a, b and c.

The protein resides in the cell inner membrane. In terms of biological role, produces ATP from ADP in the presence of a proton gradient across the membrane. The gamma chain is believed to be important in regulating ATPase activity and the flow of protons through the CF(0) complex. The sequence is that of ATP synthase gamma chain from Burkholderia lata (strain ATCC 17760 / DSM 23089 / LMG 22485 / NCIMB 9086 / R18194 / 383).